A 58-amino-acid polypeptide reads, in one-letter code: Metallothionein (58 aa).

The tract at residues 1-29 (MPGPCCNDVCECAAGGCKTGCVCTSCRCS) is beta. 18 residues coordinate a divalent metal cation: Cys-5, Cys-6, Cys-10, Cys-12, Cys-17, Cys-21, Cys-23, Cys-26, Cys-28, Cys-31, Cys-34, Cys-38, Cys-40, Cys-46, Cys-50, Cys-54, Cys-56, and Cys-57. Residues 30-58 (PCDKCTSGCKCPSKEECAKTCSKPCECCP) are alpha.

Metallothioneins have a high content of cysteine residues that bind various heavy metals. Class I MTS in crustacea are involved in the sequestration of elevated levels of heavy-metal ions. This Astacus astacus (Noble crayfish) protein is Metallothionein.